The sequence spans 552 residues: MSKFVFVTGGVVSSIGKGIVAASLGRLLKSRHYSVSILKLDPYINVDPGTMSPFQHGEVFVTEDGAETDLDLGHYERFTDTSMSRLNSVTTGSIYQAVINKERRGAYMGGTVQVIPHITNEIKERILRVAQNTNPDVVITEIGGTVGDIESLPFLEAIRQFRKEVGRHNVIYMHVTLIPWIPAAKEMKTKPTQHSVKELRSIGIQPDILVCRCDRPLHPGMKEKLSEFCDVPVESVITCQDASSIYEVPLILEKEGLAHQTLELLRMENRSPDLSQWQSLVEKMQSPHHDITVALVGKYVQLSDAYLSVVEALGHAAIASDSKLHLRWISAEEIEAQGAATFLKDVDGVLVPGGFGIRGVDGKVQAIEYARENQLPFLGLCLGMQCSVIEWARNVAKLPEANSAEFETETPNPVINLLPEQQDVVDLGGTMRLGLYPCRIAPDTLAFSLYQKEVVYERHRHRYEFNNSYRTQFTDTGFVVSGTSPDGRLVEIVEYPHHPFFIACQFHPEFHSRPNQAHPLFSGFINAVLKRRNAPAKIAVNCHTVTEDHEPS.

Residues 1–267 form an amidoligase domain region; it reads MSKFVFVTGG…AHQTLELLRM (267 aa). Ser-13 lines the CTP pocket. Residue Ser-13 coordinates UTP. Residues 14–19 and Asp-71 each bind ATP; that span reads SIGKGI. Mg(2+)-binding residues include Asp-71 and Glu-141. Residues 148 to 150, 188 to 193, and Lys-224 each bind CTP; these read DIE and KTKPTQ. UTP-binding positions include 188-193 and Lys-224; that span reads KTKPTQ. A Glutamine amidotransferase type-1 domain is found at 292-534; the sequence is TVALVGKYVQ…INAVLKRRNA (243 aa). Residue Gly-354 coordinates L-glutamine. Cys-381 serves as the catalytic Nucleophile; for glutamine hydrolysis. L-glutamine contacts are provided by residues 382–385, Glu-405, and Arg-462; that span reads LGMQ. Active-site residues include His-507 and Glu-509.

This sequence belongs to the CTP synthase family. As to quaternary structure, homotetramer.

The enzyme catalyses UTP + L-glutamine + ATP + H2O = CTP + L-glutamate + ADP + phosphate + 2 H(+). The catalysed reaction is L-glutamine + H2O = L-glutamate + NH4(+). It catalyses the reaction UTP + NH4(+) + ATP = CTP + ADP + phosphate + 2 H(+). It functions in the pathway pyrimidine metabolism; CTP biosynthesis via de novo pathway; CTP from UDP: step 2/2. With respect to regulation, allosterically activated by GTP, when glutamine is the substrate; GTP has no effect on the reaction when ammonia is the substrate. The allosteric effector GTP functions by stabilizing the protein conformation that binds the tetrahedral intermediate(s) formed during glutamine hydrolysis. Inhibited by the product CTP, via allosteric rather than competitive inhibition. Catalyzes the ATP-dependent amination of UTP to CTP with either L-glutamine or ammonia as the source of nitrogen. Regulates intracellular CTP levels through interactions with the four ribonucleotide triphosphates. The protein is CTP synthase of Synechocystis sp. (strain ATCC 27184 / PCC 6803 / Kazusa).